We begin with the raw amino-acid sequence, 314 residues long: Methionyl-tRNA formyltransferase (314 aa).

Residue 110–113 participates in (6S)-5,6,7,8-tetrahydrofolate binding; it reads SLLP.

Belongs to the Fmt family.

The enzyme catalyses L-methionyl-tRNA(fMet) + (6R)-10-formyltetrahydrofolate = N-formyl-L-methionyl-tRNA(fMet) + (6S)-5,6,7,8-tetrahydrofolate + H(+). Its function is as follows. Attaches a formyl group to the free amino group of methionyl-tRNA(fMet). The formyl group appears to play a dual role in the initiator identity of N-formylmethionyl-tRNA by promoting its recognition by IF2 and preventing the misappropriation of this tRNA by the elongation apparatus. In Bacillus thuringiensis subsp. konkukian (strain 97-27), this protein is Methionyl-tRNA formyltransferase.